Here is a 586-residue protein sequence, read N- to C-terminus: Lamin-B1 (586 aa).

Residues 1–31 (MATATPVPPRMGSRAGGPTTPLSPTRLSRLQ) are disordered. Residue Ala2 is modified to N-acetylalanine. The tract at residues 2 to 34 (ATATPVPPRMGSRAGGPTTPLSPTRLSRLQEKE) is head. 2 positions are modified to phosphothreonine: Thr3 and Thr5. Position 14 is an omega-N-methylarginine (Arg14). At Thr20 the chain carries Phosphothreonine. Residue Ser23 is modified to Phosphoserine. Position 25 is a phosphothreonine (Thr25). A Phosphoserine modification is found at Ser28. An IF rod domain is found at 32–388 (EKEELRELND…KLLEGEEERL (357 aa)). Residues 35–69 (ELRELNDRLAVYIDKVRSLETENSALQLQVTEREE) form a coil 1A region. Positions 70–81 (VRGRELTGLKAL) are linker 1. A coil 1B region spans residues 82–215 (YETELADARR…EFRKSMYEEE (134 aa)). Lys102 participates in a covalent cross-link: Glycyl lysine isopeptide (Lys-Gly) (interchain with G-Cter in SUMO2). Residue Lys111 is modified to N6-acetyllysine. Lys123 is covalently cross-linked (Glycyl lysine isopeptide (Lys-Gly) (interchain with G-Cter in SUMO2)). Ser126 is subject to Phosphoserine. A Glycyl lysine isopeptide (Lys-Gly) (interchain with G-Cter in SUMO2) cross-link involves residue Lys145. At Lys157 the chain carries N6-acetyllysine; alternate. Lys157 is covalently cross-linked (Glycyl lysine isopeptide (Lys-Gly) (interchain with G-Cter in SUMO2); alternate). At Ser158 the chain carries Phosphoserine. A Glycyl lysine isopeptide (Lys-Gly) (interchain with G-Cter in SUMO2) cross-link involves residue Lys181. Residues Ser200, Ser210, and Ser232 each carry the phosphoserine modification. A linker 2 region spans residues 216-243 (INETRRKHETRLVEVDSGRQIEYEYKLA). Residues Lys241 and Lys261 each participate in a glycyl lysine isopeptide (Lys-Gly) (interchain with G-Cter in SUMO2) cross-link. The coil 2 stretch occupies residues 244–386 (QALHEMREQH…YRKLLEGEEE (143 aa)). An N6-acetyllysine; alternate modification is found at Lys271. Lys271 participates in a covalent cross-link: Glycyl lysine isopeptide (Lys-Gly) (interchain with G-Cter in SUMO2); alternate. A phosphoserine mark is found at Ser278 and Ser302. Residue Lys312 forms a Glycyl lysine isopeptide (Lys-Gly) (interchain with G-Cter in SUMO2) linkage. Lys330 carries the post-translational modification N6-acetyllysine; alternate. A Glycyl lysine isopeptide (Lys-Gly) (interchain with G-Cter in SUMO2); alternate cross-link involves residue Lys330. Residues Ser375 and Ser393 each carry the phosphoserine modification. Positions 387-586 (RLKLSPSPSS…RASNRSCAIM (200 aa)) are tail. Residues 388-432 (LKLSPSPSSRVTVSRASSSRSVRTTRGKRKRVDVEESEASSSVSI) are disordered. A compositionally biased stretch (low complexity) spans 390–409 (LSPSPSSRVTVSRASSSRSV). A glycan (O-linked (GlcNAc) threonine) is linked at Thr399. Arg413 carries the omega-N-methylarginine modification. The Nuclear localization signal signature appears at 415-420 (KRKRVD). The LTD domain maps to 430 to 546 (VSISHSASAT…EEVAQRSTVF (117 aa)). At Lys483 the chain carries N6-acetyllysine. A Glycyl lysine isopeptide (Lys-Gly) (interchain with G-Cter in SUMO2) cross-link involves residue Lys532. The residue at position 534 (Ser534) is a Phosphoserine. Lys547 participates in a covalent cross-link: Glycyl lysine isopeptide (Lys-Gly) (interchain with G-Cter in SUMO2). Residue Thr575 is modified to Phosphothreonine. Cys583 carries the post-translational modification Cysteine methyl ester. The S-farnesyl cysteine moiety is linked to residue Cys583. A propeptide spans 584-586 (AIM) (removed in mature form).

Belongs to the intermediate filament family. As to quaternary structure, homodimer. Lamin dimers then assemble into dimeric head-to-tail polymers. Ultimately, two head-to-tail polymers assemble laterally into a protofilament with a uniformly shaped rod of 3.5 nm in diameter. Interacts with SPAG4 and SEPT12. B-type lamins undergo a series of modifications, such as farnesylation and phosphorylation. Increased phosphorylation of the lamins occurs before envelope disintegration and probably plays a role in regulating lamin associations. Post-translationally, phosphorylation plays a key role in lamin organization, subcellular localization and nuclear envelope disintegration. Phosphorylation by CDK1 at Ser-23 and Ser-393 at the onset of mitosis drives lamin disassembly and nuclear envelope breakdown.

It localises to the nucleus lamina. Its function is as follows. Lamins are intermediate filament proteins that assemble into a filamentous meshwork, and which constitute the major components of the nuclear lamina, a fibrous layer on the nucleoplasmic side of the inner nuclear membrane. Lamins provide a framework for the nuclear envelope, bridging the nuclear envelope and chromatin, thereby playing an important role in nuclear assembly, chromatin organization, nuclear membrane and telomere dynamics. The structural integrity of the lamina is strictly controlled by the cell cycle, as seen by the disintegration and formation of the nuclear envelope in prophase and telophase, respectively. This Homo sapiens (Human) protein is Lamin-B1 (LMNB1).